A 1071-amino-acid chain; its full sequence is DNA-directed RNA polymerase subunit beta (1071 aa).

It belongs to the RNA polymerase beta chain family. In plastids the minimal PEP RNA polymerase catalytic core is composed of four subunits: alpha, beta, beta', and beta''. When a (nuclear-encoded) sigma factor is associated with the core the holoenzyme is formed, which can initiate transcription.

The protein localises to the plastid. It is found in the chloroplast. It catalyses the reaction RNA(n) + a ribonucleoside 5'-triphosphate = RNA(n+1) + diphosphate. Functionally, DNA-dependent RNA polymerase catalyzes the transcription of DNA into RNA using the four ribonucleoside triphosphates as substrates. This Panax ginseng (Korean ginseng) protein is DNA-directed RNA polymerase subunit beta.